The sequence spans 605 residues: IQ domain-containing protein IQM2 (605 aa).

Residues 105–134 (KHEAAIKLQKVYKSFRTRRKLADCAVLVEQ) form the IQ domain. A disordered region spans residues 408 to 505 (QDKVDPSGEE…EEGETKESEV (98 aa)). Residues 425-440 (SISRKQSDLETPEKME) show a composition bias toward basic and acidic residues. Positions 462–480 (DYDSGDDEEEEEEMFELEQ) are enriched in acidic residues. Low complexity predominate over residues 481–490 (ESMPSEQSSP). A compositionally biased stretch (basic and acidic residues) spans 491–505 (RGEEKEEGETKESEV).

Expressed in rosette and cauline leaves, stems, flowers and siliques, and at lower levels in roots.

It is found in the cytoplasm. Its subcellular location is the nucleus. In terms of biological role, may be involved in biotic and abiotic stress responses. In Arabidopsis thaliana (Mouse-ear cress), this protein is IQ domain-containing protein IQM2.